Reading from the N-terminus, the 925-residue chain is Antiviral innate immune response receptor RIG-I (925 aa).

2 CARD domains span residues 1–87 and 92–172; these read MTTE…GLYE and WDFK…KTLK. A (Microbial infection) Phosphoserine modification is found at Ser-8. Ser-8 carries the phosphoserine modification. Glycyl lysine isopeptide (Lys-Gly) (interchain with G-Cter in ubiquitin) cross-links involve residues Lys-48, Lys-96, Lys-154, and Lys-164. The residue at position 170 (Thr-170) is a Phosphothreonine. Glycyl lysine isopeptide (Lys-Gly) (interchain with G-Cter in ubiquitin) cross-links involve residues Lys-172, Lys-181, Lys-193, and Lys-203. The interaction with ZC3HAV1 stretch occupies residues 218-925; it reads ECQNLSENSC…IPFDPAEMSK (708 aa). One can recognise a Helicase ATP-binding domain in the interval 251 to 430; that stretch reads ALPAMKGKNT…DEALDYICKL (180 aa). Position 264–271 (264–271) interacts with ATP; the sequence is APTGCGKT. The DECH box motif lies at 372-375; it reads DECH. Residues Asn-495 and Asn-549 each carry the (Microbial infection) Deamidated asparagine; by herpes simplex virus 1/HHV-1 UL37 modification. The Helicase C-terminal domain occupies 610-776; it reads KLEDLCFILQ…RLQTWDEAVF (167 aa). The interval 735–925 is mediates interaction with RNF135; sequence GSKCFLLTSN…IPFDPAEMSK (191 aa). Thr-770 is subject to Phosphothreonine; by CK2. Residues 794–925 form the RLR CTR domain; the sequence is QEKPKPVPDK…IPFDPAEMSK (132 aa). Cys-810 is a binding site for Zn(2+). A Glycyl lysine isopeptide (Lys-Gly) (interchain with G-Cter in ubiquitin) cross-link involves residue Lys-812. Cys-813 is a Zn(2+) binding site. 2 positions are modified to phosphoserine; by CK2: Ser-854 and Ser-855. Lys-858 bears the N6-acetyllysine mark. Cys-864 and Cys-869 together coordinate Zn(2+). Lys-909 is subject to N6-acetyllysine.

This sequence belongs to the helicase family. RLR subfamily. Monomer; maintained as a monomer in an autoinhibited state. Upon binding of viral RNAs and conformational shift, homooligomerizes and forms filaments on these molecules. Interacts (via tandem CARD domain) with MAVS/IPS1 promoting its filamentation. Interacts with DHX58/LGP2, IKBKE, TBK1 and STING1. Interacts (via CARD domain) with TRIM25 (via SPRY domain). Interacts (double-stranded RNA-bound oligomeric form) with RNF135 (homodimer); involved in RNA length-dependent activation of the RIG-I signaling pathway. Interacts with CYLD. Interacts with NLRC5; blocks the interaction of MAVS/IPS1 to RIGI. Interacts with SRC. Interacts with DDX60. Interacts with isoform 2 of ZC3HAV1 (via zinc-fingers) in an RNA-dependent manner. Interacts (via tandem CARD domain) with SEC14L1; the interaction is direct and impairs the interaction of RIGI with MAVS/IPS1. Interacts with VCP/p97; interaction is direct and allows the recruitment of RNF125 and subsequent ubiquitination and degradation. Interacts with NOP53; may regulate RIGI through USP15-mediated 'Lys-63'-linked deubiquitination. Interacts with SIGLEC10, CBL and PTPN11; within a negative feedback loop leading to RIGI degradation. Interacts with LRRC25. Interacts with ZCCHC3; leading to activation of RIGI. Interacts with RNF123. Interacts with UBE2D3 and UBE2N; E2 ubiquitin ligases involved in RNF135-mediated ubiquitination of RIGI and activation of the RIG-I signaling pathway. Interacts with IFIT3. Interacts with DDX3X. Interacts with RTN3. Interacts with ARL16; this interaction is GTP-dependent and induced upon viral infection; this interaction suppresses the RNA sensing activity of RIGI. Interacts with DHX16; this interaction enhances RIGI-mediated antiviral response. Interacts with IRGM; promoting RIGI degradation. Interacts with IFI6; this interaction inhibits RIGI activation. Interacts with ECSIT; this interaction bridges RIGI to the MAVS complex at the mitochondrion. Interacts with YWHAE; this interaction drives RIGI at the mitochondrion. As to quaternary structure, (Microbial infection) Interacts with protein Z of Guanarito virus, Machupo virus, Junin arenavirus and Sabia virus. This interaction disrupts its interaction with MAVS/IPS1, impeding downstream IRF3 and NF-kappa-B activation and resulting in decreased IFN-beta induction. In terms of assembly, (Microbial infection) Interacts (via CARD domain) with Human respiratory syncytial virus A non-structural protein 2 (NS2) and this interaction disrupts its interaction with MAVS/IPS1, impeding downstream IRF3 activation. (Microbial infection) Interacts with Rotavirus A non-structural protein 1 (NSP1) and this interaction induces down-regulation of RIGI. As to quaternary structure, (Microbial infection) Interacts with paramyxoviruses (Sendai virus, Nipah virus, Measles virus and Parainfluenza virus 5) protein V; this interaction inhibits TRIM25-mediated ubiquitination of RIG-I and prevents downstream RIG-I signaling thereby inhibiting the IFN responses. In terms of assembly, (Microbial infection) Interacts with herpes simplex virus 1 protein US11; this interaction prevents the interaction of MAVS/IPS1 to RIGI. (Microbial infection) Interacts with herpes simplex virus 1 protein UL37; this interaction deaminates RIGI and inhibits its activation. As to quaternary structure, (Microbial infection) Interacts with Severe fever with thrombocytopenia virus (SFTSV) NSs; this interaction this interaction sequesters RIGI in NSs-induced cytoplasmic inclusion bodies thereby inhibiting the IFN responses. In terms of processing, phosphorylated in resting cells and dephosphorylated in RNA virus-infected cells. Phosphorylation at Thr-770, Ser-854 and Ser-855 results in inhibition of its activity while dephosphorylation at these sites results in its activation. Post-translationally, ubiquitinated. 'Lys-63' ubiquitination by RNF135, which occurs after RNA-binding and homodimerization, releases the autoinhibition of the CARD domains by the RLR CTR domain, an essential step in the activation of the RIG-I signaling pathway. Lys-172 is the critical site of ubiquitination for MAVS/IPS1 binding and to induce anti-viral signal transduction. Lys-154, Lys-164 and Lys-172 are shared sites for RNF135-mediated and TRIM4-mediated ubiquitination. Also undergoes 'Lys-48' ubiquitination at Lys-181 by RNF125 that leads to proteasomal degradation. 'Lys-48' ubiquitination follows viral infection and is enhanced by 'Lys-63'-linked ubiquitination of the CARD domains that promotes interaction with VCP/p97 and subsequent recruitment of RNF125. Within a negative feedback loop involving SIGLEC10 and PTPN11, 'Lys-48' ubiquitination at Lys-812 by CBL also elicits the proteasomal degradation of RIGI. Deubiquitinated by CYLD, a protease that selectively cleaves 'Lys-63'-linked ubiquitin chains. Also probably deubiquitinated by USP17L2/USP17 that cleaves 'Lys-48'- and 'Lys-63'-linked ubiquitin chains and positively regulates the receptor. Ubiquitinated by TRIM40 via 'Lys-48'-linked ubiquitination; leading to proteasomal degradation. Deubiquitinated by USP27X that cleaves 'Lys-63'-linked ubiquitin chains and inhibits the innate immune receptor activity. Deubiquitinated by USP3 that also cleaves 'Lys-63'-linked ubiquitin chains and inhibits the innate immune receptor activity. Undergoes 'Lys-48'-linked ubiquitination catalyzed by MARCHF5 at Lys-193 and Lys-203, leading to proteasomal degradation. Phosphorylated at Ser-8 and Thr-170; these phosphorylations suppresse the TRIM25-mediated 'Lys-63'-linked ubiquitination of RIG-I and thereby prevents RIG-I downstream signaling. Dephosphorylated by phosphatases PPP1CA/PPP1CC; this step is essential to activate RIGI and initiate downstream signaling. In terms of processing, ISGylated. Conjugated to ubiquitin-like protein ISG15 upon IFN-beta stimulation. ISGylation negatively regulates its function in antiviral signaling response. Post-translationally, sumoylated, probably by MUL1; inhibiting its polyubiquitination. Acetylated in response to RNA virus infection. Deacetylated by HDAC6 in the presence of viral mRNAs which is required for detection of viral RNA by RIGI. In terms of processing, (Microbial infection) Deamidated on Asn-495 and Asn-549 by herpes simplex virus 1 protein UL37. These modifications eliminate RIGI detection of viral RNA and restriction of viral replication. Post-translationally, degraded via selective autophagy following interaction with IRGM. IRGM promotes RIGI recruitment to autophagosome membranes, promoting its SQSTM1/p62-dependent autophagic degradation. (Microbial infection) Cleaved by the protease 3C of coxsackievirus B3, poliovirus and enterovirus 71 allowing the virus to disrupt the host type I interferon production. In terms of processing, (Microbial infection) Phosphorylated at Ser-8 by herpes simplex virus 1 protein US3 leading to inhibition of critical RIGI activation steps. As to expression, present in vascular smooth cells (at protein level).

It is found in the cytoplasm. The protein localises to the cell projection. The protein resides in the ruffle membrane. Its subcellular location is the cytoskeleton. It localises to the cell junction. It is found in the tight junction. The enzyme catalyses ATP + H2O = ADP + phosphate + H(+). Its function is as follows. Innate immune receptor that senses cytoplasmic viral nucleic acids and activates a downstream signaling cascade leading to the production of type I interferons and pro-inflammatory cytokines. Forms a ribonucleoprotein complex with viral RNAs on which it homooligomerizes to form filaments. The homooligomerization allows the recruitment of RNF135 an E3 ubiquitin-protein ligase that activates and amplifies the RIG-I-mediated antiviral signaling in an RNA length-dependent manner through ubiquitination-dependent and -independent mechanisms. Upon activation, associates with mitochondria antiviral signaling protein (MAVS/IPS1) that activates the IKK-related kinases TBK1 and IKBKE which in turn phosphorylate the interferon regulatory factors IRF3 and IRF7, activating transcription of antiviral immunological genes including the IFN-alpha and IFN-beta interferons. Ligands include 5'-triphosphorylated ssRNAs and dsRNAs but also short dsRNAs (&lt;1 kb in length). In addition to the 5'-triphosphate moiety, blunt-end base pairing at the 5'-end of the RNA is very essential. Overhangs at the non-triphosphorylated end of the dsRNA RNA have no major impact on its activity. A 3'overhang at the 5'triphosphate end decreases and any 5'overhang at the 5' triphosphate end abolishes its activity. Detects both positive and negative strand RNA viruses including members of the families Paramyxoviridae: Human respiratory syncytial virus and measles virus (MeV), Rhabdoviridae: vesicular stomatitis virus (VSV), Orthomyxoviridae: influenza A and B virus, Flaviviridae: Japanese encephalitis virus (JEV), hepatitis C virus (HCV), dengue virus (DENV) and west Nile virus (WNV). It also detects rotaviruses and reoviruses. Detects and binds to SARS-CoV-2 RNAs which is inhibited by m6A RNA modifications. Also involved in antiviral signaling in response to viruses containing a dsDNA genome such as Epstein-Barr virus (EBV). Detects dsRNA produced from non-self dsDNA by RNA polymerase III, such as Epstein-Barr virus-encoded RNAs (EBERs). May play important roles in granulocyte production and differentiation, bacterial phagocytosis and in the regulation of cell migration. The polypeptide is Antiviral innate immune response receptor RIG-I (Homo sapiens (Human)).